The chain runs to 277 residues: NADPH-dependent 7-cyano-7-deazaguanine reductase (277 aa).

83–85 (IES) serves as a coordination point for substrate. Residue 85-86 (SK) coordinates NADPH. Cys-184 acts as the Thioimide intermediate in catalysis. The active-site Proton donor is the Asp-191. Position 223–224 (223–224 (HE)) interacts with substrate. NADPH is bound at residue 252–253 (RG).

Belongs to the GTP cyclohydrolase I family. QueF type 2 subfamily. As to quaternary structure, homodimer.

It localises to the cytoplasm. It catalyses the reaction 7-aminomethyl-7-carbaguanine + 2 NADP(+) = 7-cyano-7-deazaguanine + 2 NADPH + 3 H(+). The protein operates within tRNA modification; tRNA-queuosine biosynthesis. Catalyzes the NADPH-dependent reduction of 7-cyano-7-deazaguanine (preQ0) to 7-aminomethyl-7-deazaguanine (preQ1). The chain is NADPH-dependent 7-cyano-7-deazaguanine reductase from Cupriavidus necator (strain ATCC 17699 / DSM 428 / KCTC 22496 / NCIMB 10442 / H16 / Stanier 337) (Ralstonia eutropha).